A 393-amino-acid chain; its full sequence is Formate-dependent phosphoribosylglycinamide formyltransferase (393 aa).

N(1)-(5-phospho-beta-D-ribosyl)glycinamide-binding positions include 22 to 23 (EL) and Glu82. Residues Arg114, Lys155, 160 to 165 (SSGHGQ), 195 to 198 (EGFV), and Glu203 each bind ATP. An ATP-grasp domain is found at 119–308 (RLAAEELGLP…EFALHARAIL (190 aa)). Mg(2+)-binding residues include Glu267 and Glu279. N(1)-(5-phospho-beta-D-ribosyl)glycinamide contacts are provided by residues Asp286, Lys356, and 363–364 (RR).

Belongs to the PurK/PurT family. Homodimer.

It catalyses the reaction N(1)-(5-phospho-beta-D-ribosyl)glycinamide + formate + ATP = N(2)-formyl-N(1)-(5-phospho-beta-D-ribosyl)glycinamide + ADP + phosphate + H(+). Its pathway is purine metabolism; IMP biosynthesis via de novo pathway; N(2)-formyl-N(1)-(5-phospho-D-ribosyl)glycinamide from N(1)-(5-phospho-D-ribosyl)glycinamide (formate route): step 1/1. Involved in the de novo purine biosynthesis. Catalyzes the transfer of formate to 5-phospho-ribosyl-glycinamide (GAR), producing 5-phospho-ribosyl-N-formylglycinamide (FGAR). Formate is provided by PurU via hydrolysis of 10-formyl-tetrahydrofolate. The chain is Formate-dependent phosphoribosylglycinamide formyltransferase from Mannheimia succiniciproducens (strain KCTC 0769BP / MBEL55E).